The primary structure comprises 363 residues: Fructose-bisphosphate aldolase C (363 aa).

Substrate contacts are provided by Arg56 and Lys147. Residue Lys230 is the Schiff-base intermediate with dihydroxyacetone-P of the active site.

Belongs to the class I fructose-bisphosphate aldolase family. In terms of assembly, homotetramer. In terms of tissue distribution, expressed in brain but not in liver or muscle.

It carries out the reaction beta-D-fructose 1,6-bisphosphate = D-glyceraldehyde 3-phosphate + dihydroxyacetone phosphate. It participates in carbohydrate degradation; glycolysis; D-glyceraldehyde 3-phosphate and glycerone phosphate from D-glucose: step 4/4. This chain is Fructose-bisphosphate aldolase C (aldoc), found in Carassius auratus (Goldfish).